We begin with the raw amino-acid sequence, 345 residues long: Nuclear distribution protein nudE-like 1-A (345 aa).

Residues Trp-19–Gly-190 adopt a coiled-coil conformation. Residues Ala-182 to Arg-192 are compositionally biased toward basic and acidic residues. Disordered stretches follow at residues Ala-182–Thr-206 and Pro-326–Val-345. Residues Pro-334–Val-345 are compositionally biased toward pro residues.

It belongs to the nudE family. In terms of processing, phosphorylated in mitosis.

It is found in the cytoplasm. It localises to the cytoskeleton. Its subcellular location is the microtubule organizing center. The protein resides in the centrosome. The protein localises to the spindle. Required for organization of the cellular microtubule array and microtubule anchoring at the centrosome. Positively regulates the activity of the minus-end directed microtubule motor protein dynein. May enhance dynein-mediated microtubule sliding by targeting dynein to the microtubule plus end. Positively regulates lysosome peripheral distribution and ruffled border formation in osteoclasts. This is Nuclear distribution protein nudE-like 1-A (ndel1-a) from Xenopus laevis (African clawed frog).